Consider the following 60-residue polypeptide: MAKIKITWVKSTIGYKFDQAATIKALGFKKLNQSVIQDDSSAIRGMILKVRHLVVLEEVI.

It belongs to the universal ribosomal protein uL30 family. As to quaternary structure, part of the 50S ribosomal subunit.

This Dehalococcoides mccartyi (strain ATCC BAA-2100 / JCM 16839 / KCTC 5957 / BAV1) protein is Large ribosomal subunit protein uL30.